We begin with the raw amino-acid sequence, 331 residues long: Anthranilate phosphoribosyltransferase (331 aa).

Residues G79, 82–83, S87, 89–92, 107–115, and S119 contribute to the 5-phospho-alpha-D-ribose 1-diphosphate site; these read GD, NIST, and KHCNSSISG. G79 serves as a coordination point for anthranilate. Position 91 (S91) interacts with Mg(2+). Anthranilate is bound at residue N110. An anthranilate-binding site is contributed by R165. D223 and E224 together coordinate Mg(2+).

The protein belongs to the anthranilate phosphoribosyltransferase family. In terms of assembly, homodimer. Mg(2+) is required as a cofactor.

It catalyses the reaction N-(5-phospho-beta-D-ribosyl)anthranilate + diphosphate = 5-phospho-alpha-D-ribose 1-diphosphate + anthranilate. It functions in the pathway amino-acid biosynthesis; L-tryptophan biosynthesis; L-tryptophan from chorismate: step 2/5. Functionally, catalyzes the transfer of the phosphoribosyl group of 5-phosphorylribose-1-pyrophosphate (PRPP) to anthranilate to yield N-(5'-phosphoribosyl)-anthranilate (PRA). This is Anthranilate phosphoribosyltransferase from Buchnera aphidicola subsp. Melaphis rhois.